Consider the following 265-residue polypeptide: Small ribosomal subunit protein uS2 (265 aa).

It belongs to the universal ribosomal protein uS2 family.

The sequence is that of Small ribosomal subunit protein uS2 from Gluconobacter oxydans (strain 621H) (Gluconobacter suboxydans).